A 271-amino-acid polypeptide reads, in one-letter code: Plasmanylethanolamine desaturase 1 (271 aa).

A disordered region spans residues 1-25; the sequence is MAGAEDAPGRQPELDEDETAEGRRW. The next 3 helical transmembrane spans lie at 48–68, 75–95, and 166–186; these read WCSVILCFSLIAHNLVHLLLL, PLVILGVVAGALVADFLSGLV, and LYPWECFVFCLTIFGTFTNQI. The Histidine box-1 signature appears at 187–191; that stretch reads HKWSH. A Histidine box-2 motif is present at residues 214 to 218; that stretch reads HHRIH.

It belongs to the fatty acid desaturase CarF family.

The protein localises to the endoplasmic reticulum membrane. It carries out the reaction a 1-(1,2-saturated alkyl)-2-acyl-sn-glycero-3-phosphoethanolamine + 2 Fe(II)-[cytochrome b5] + O2 + 2 H(+) = a 1-O-(1Z-alkenyl)-2-acyl-sn-glycero-3-phosphoethanolamine + 2 Fe(III)-[cytochrome b5] + 2 H2O. The catalysed reaction is a 1-O-hexadecyl-2-acyl-sn-glycero-3-phosphoethanolamine + 2 Fe(II)-[cytochrome b5] + O2 + 2 H(+) = a 1-O-(1Z-hexadecenyl)-2-acyl-sn-glycero-3-phosphoethanolamine + 2 Fe(III)-[cytochrome b5] + 2 H2O. The enzyme catalyses a 1-O-octadecyl-2-acyl-sn-glycero-3-phosphoethanolamine + 2 Fe(II)-[cytochrome b5] + O2 + 2 H(+) = a 1-O-(1Z-octadecenyl)-2-acyl-sn-glycero-3-phosphoethanolamine + 2 Fe(III)-[cytochrome b5] + 2 H2O. It catalyses the reaction a 1-O-(9Z-octadecenyl)-2-acyl-sn-glycero-3-phosphoethanolamine + 2 Fe(II)-[cytochrome b5] + O2 + 2 H(+) = a 1-O-(1Z,9Z-octadecadienyl)-2-acyl-sn-glycero-3-phosphoethanolamine + 2 Fe(III)-[cytochrome b5] + 2 H2O. It functions in the pathway lipid metabolism; fatty acid metabolism. Functionally, plasmanylethanolamine desaturase involved in plasmalogen biogenesis in the endoplasmic reticulum membrane. Plasmalogens are glycerophospholipids with a hydrocarbon chain linked by a vinyl ether bond at the glycerol sn-1 position, and are involved in antioxidative and signaling mechanisms. The polypeptide is Plasmanylethanolamine desaturase 1 (Mus musculus (Mouse)).